The sequence spans 49 residues: MNPKALCSFLLATFLLLTVTIMPSVHANAEANADAIIGPCPKKPIGIVC.

Positions methionine 1–alanine 27 are cleaved as a signal peptide. Positions asparagine 28 to alanine 35 are excised as a propeptide.

Contains 1 disulfide bond. As to expression, expressed by the venom gland.

It is found in the secreted. The sequence is that of U6-myrmicitoxin-Mri1a from Manica rubida (European giant red ant).